The primary structure comprises 279 residues: Putative pyruvate, phosphate dikinase regulatory protein (279 aa).

Gly-154–Thr-161 contacts ADP.

Belongs to the pyruvate, phosphate/water dikinase regulatory protein family. PDRP subfamily.

The catalysed reaction is N(tele)-phospho-L-histidyl/L-threonyl-[pyruvate, phosphate dikinase] + ADP = N(tele)-phospho-L-histidyl/O-phospho-L-threonyl-[pyruvate, phosphate dikinase] + AMP + H(+). The enzyme catalyses N(tele)-phospho-L-histidyl/O-phospho-L-threonyl-[pyruvate, phosphate dikinase] + phosphate + H(+) = N(tele)-phospho-L-histidyl/L-threonyl-[pyruvate, phosphate dikinase] + diphosphate. In terms of biological role, bifunctional serine/threonine kinase and phosphorylase involved in the regulation of the pyruvate, phosphate dikinase (PPDK) by catalyzing its phosphorylation/dephosphorylation. The polypeptide is Putative pyruvate, phosphate dikinase regulatory protein (Rhodopseudomonas palustris (strain BisB18)).